A 617-amino-acid polypeptide reads, in one-letter code: Sphingosine kinase 2 (617 aa).

The interval 1–140 is required for binding to sulfatide and phosphoinositides and for membrane localization; that stretch reads MAPPPLLPVA…LSGDQEITPE (140 aa). Residues 87–95 carry the Nuclear localization signal motif; that stretch reads RGRRGGRRR. One can recognise a DAGKc domain in the interval 143 to 290; that stretch reads PRKPRLLILV…LDLLSVTLAS (148 aa). ATP is bound by residues 153-155 and 185-189; these read NPF and TERQN. 210-213 contacts substrate; sequence SGDG. The active-site Proton donor/acceptor is the D212. ATP-binding positions include E217 and 242–244; that span reads GSG. A substrate-binding site is contributed by D309. 2 residues coordinate ATP: R316 and R322. S358 and S364 each carry phosphoserine. Residues 371–472 are disordered; it reads APAPAATHSP…GFLPPTHSAP (102 aa). At T377 the chain carries Phosphothreonine. The Nuclear export signal signature appears at 381–390; sequence LHRSVSDLPL. 2 positions are modified to phosphoserine: S384 and S386. A compositionally biased stretch (gly residues) spans 412 to 426; sequence NGGGPELTGDWGGAG. At T578 the chain carries Phosphothreonine. ATP is bound at residue 586-588; that stretch reads DGE.

As to quaternary structure, interacts with histone H3. Interacts with HDAC1, HDAC2, MBD2 and SIN3A. Interacts with EEF1A1; the interaction enhances SPHK2 kinase activity. Interacts with PHB2. Mg(2+) is required as a cofactor. In terms of processing, phosphorylated by PKD on Ser-384 and Ser-386 upon PMA treatment. Phosphorylation induces export from the nucleus to the cytoplasm. Phosphorylated by MAPK1 and MAPK2 at Thr-578, phosphorylation is induced by agonists such as EGF and PMA and increases kinase activity. Post-translationally, cleaved by CASP1 in apoptotic cells. The truncated form is released from cells. Expressed in heart, brain, liver, kidney and testis. Expressed by mast cells (at protein level). In the substantia nigra, expressed by dopaminergic neurons (at protein level).

Its subcellular location is the lysosome membrane. The protein localises to the cytoplasm. It localises to the cell membrane. It is found in the endoplasmic reticulum. The protein resides in the nucleus. Its subcellular location is the mitochondrion inner membrane. It carries out the reaction a sphingoid base + ATP = a sphingoid 1-phosphate + ADP + H(+). It catalyses the reaction sphing-4-enine + ATP = sphing-4-enine 1-phosphate + ADP + H(+). The catalysed reaction is sphinganine + ATP = sphinganine 1-phosphate + ADP + H(+). The enzyme catalyses (4R)-hydroxysphinganine + ATP = (4R)-hydroxysphinganine 1-phosphate + ADP + H(+). Functionally, catalyzes the phosphorylation of sphingosine to form sphingosine-1-phosphate (SPP), a lipid mediator with both intra- and extracellular functions. Also acts on D-erythro-dihydrosphingosine, D-erythro-sphingosine and L-threo-dihydrosphingosine. Binds phosphoinositides. In contrast to prosurvival SPHK1, has a positive effect on intracellular ceramide levels, inhibits cells growth and enhances apoptosis. In mitochondria, is important for cytochrome-c oxidase assembly and mitochondrial respiration. The SPP produced in mitochondria binds PHB2 and modulates the regulation via PHB2 of complex IV assembly and respiration. In nucleus, plays a role in epigenetic regulation of gene expression. Interacts with HDAC1 and HDAC2 and, through SPP production, inhibits their enzymatic activity, preventing the removal of acetyl groups from lysine residues with histones. Up-regulates acetylation of histone H3-K9, histone H4-K5 and histone H2B-K12. In nucleus, may have an inhibitory effect on DNA synthesis and cell cycle. In mast cells, is the main regulator of SPP production which mediates calcium influx, NF-kappa-B activation, cytokine production, such as TNF and IL6, and degranulation of mast cells. In dopaminergic neurons, is involved in promoting mitochondrial functions regulating ATP and ROS levels. Also involved in the regulation of glucose and lipid metabolism. The polypeptide is Sphingosine kinase 2 (Mus musculus (Mouse)).